We begin with the raw amino-acid sequence, 465 residues long: COP9 signalosome complex subunit 5 (465 aa).

The 143-residue stretch at Val-74–Gln-216 folds into the MPN domain. Zn(2+) is bound by residues His-162, His-164, and Asp-175. The JAMM motif signature appears at His-162–Asp-175. The segment at Ser-364–His-386 is disordered.

This sequence belongs to the peptidase M67A family. CSN5 subfamily. As to quaternary structure, component of the COP9 signalosome (CSN) complex.

The protein localises to the cytoplasm. Its subcellular location is the nucleus. Catalytic Component of the COP9 signalosome (CSN) complex that acts as an regulator of the ubiquitin (Ubl) conjugation pathway by mediating the deneddylation of the cullin subunit of SCF-type E3 ubiquitin-protein ligase complexes. The protein is COP9 signalosome complex subunit 5 (RRI1) of Candida glabrata (strain ATCC 2001 / BCRC 20586 / JCM 3761 / NBRC 0622 / NRRL Y-65 / CBS 138) (Yeast).